Here is a 252-residue protein sequence, read N- to C-terminus: 2-succinyl-6-hydroxy-2,4-cyclohexadiene-1-carboxylate synthase (252 aa).

The protein belongs to the AB hydrolase superfamily. MenH family. Monomer.

It catalyses the reaction 5-enolpyruvoyl-6-hydroxy-2-succinyl-cyclohex-3-ene-1-carboxylate = (1R,6R)-6-hydroxy-2-succinyl-cyclohexa-2,4-diene-1-carboxylate + pyruvate. Its pathway is quinol/quinone metabolism; 1,4-dihydroxy-2-naphthoate biosynthesis; 1,4-dihydroxy-2-naphthoate from chorismate: step 3/7. It functions in the pathway quinol/quinone metabolism; menaquinone biosynthesis. In terms of biological role, catalyzes a proton abstraction reaction that results in 2,5-elimination of pyruvate from 2-succinyl-5-enolpyruvyl-6-hydroxy-3-cyclohexene-1-carboxylate (SEPHCHC) and the formation of 2-succinyl-6-hydroxy-2,4-cyclohexadiene-1-carboxylate (SHCHC). The protein is 2-succinyl-6-hydroxy-2,4-cyclohexadiene-1-carboxylate synthase of Shigella flexneri serotype 5b (strain 8401).